The sequence spans 165 residues: Large ribosomal subunit protein uL10 (165 aa).

It belongs to the universal ribosomal protein uL10 family. In terms of assembly, part of the ribosomal stalk of the 50S ribosomal subunit. The N-terminus interacts with L11 and the large rRNA to form the base of the stalk. The C-terminus forms an elongated spine to which L12 dimers bind in a sequential fashion forming a multimeric L10(L12)X complex.

Its function is as follows. Forms part of the ribosomal stalk, playing a central role in the interaction of the ribosome with GTP-bound translation factors. The chain is Large ribosomal subunit protein uL10 from Shewanella pealeana (strain ATCC 700345 / ANG-SQ1).